The primary structure comprises 148 residues: Wound-induced proteinase inhibitor 2 (148 aa).

Positions 1–25 (MAVHKEVNFVAYLLIVLGMFLYVDA) are cleaved as a signal peptide. One copy of the 1; trypsin-inhibitory repeat lies at 26 to 81 (KACTRECGNLGFGICPRSEGSPLNPICINCCSGYKGCNYYNSFGKFICEGESDPKR). Disulfide bonds link Cys28-Cys116, Cys32-Cys112, Cys40-Cys122, Cys52-Cys89, Cys55-Cys73, Cys56-Cys85, Cys62-Cys98, and Cys115-Cys133. The 2; chymotrypsin-inhibitory repeat unit spans residues 83-141 (NACTFNCDPNIAYSRCPRSQGKSLIYPTGCTTCCTGYKGCYYFGKDGKFVCEGESDEPK).

It belongs to the protease inhibitor I20 (potato type II proteinase inhibitor) family.

It localises to the secreted. Potent inhibitor of both trypsin and chymotrypsin. The protein is Wound-induced proteinase inhibitor 2 of Solanum lycopersicum (Tomato).